The following is a 399-amino-acid chain: Elongation factor Tu (399 aa).

In terms of domain architecture, tr-type G spans 10 to 204 (KDHVNIGTIG…AVDDYIDTPE (195 aa)). Residues 19–26 (GHVDHGKT) form a G1 region. 19-26 (GHVDHGKT) serves as a coordination point for GTP. T26 contacts Mg(2+). Residues 60 to 64 (GITIN) form a G2 region. The G3 stretch occupies residues 81–84 (DCPG). GTP-binding positions include 81–85 (DCPGH) and 136–139 (NKKD). Residues 136 to 139 (NKKD) form a G4 region. Residues 174 to 176 (SAL) form a G5 region.

The protein belongs to the TRAFAC class translation factor GTPase superfamily. Classic translation factor GTPase family. EF-Tu/EF-1A subfamily. As to quaternary structure, monomer.

The protein localises to the cytoplasm. It catalyses the reaction GTP + H2O = GDP + phosphate + H(+). GTP hydrolase that promotes the GTP-dependent binding of aminoacyl-tRNA to the A-site of ribosomes during protein biosynthesis. This is Elongation factor Tu from Synechocystis sp. (strain ATCC 27184 / PCC 6803 / Kazusa).